The sequence spans 124 residues: UPF0538 protein (124 aa).

This sequence belongs to the UPF0538 family.

The polypeptide is UPF0538 protein (Dictyostelium discoideum (Social amoeba)).